A 400-amino-acid chain; its full sequence is MSSKLVLVLNCGSSSLKFAIIDAVNGEEYLSGLAECFHLPEARIKWKMDGNKQEAALGAGAAHSEALNFIVNTILAQKPELSAQLTAIGHRIVHGGEKYTSSVVIDESVIQGIKDAASFAPLHNPAHLIGIEEALKSFPQLKDKNVAVFDTAFHQTMPEESYLYALPYNLYKEHGIRRYGAHGTSHFYVTQEAAKMLNKPVEELNIITCHLGNGGSVSAIRNGKCVDTSMGLTPLEGLVMGTRSGDIDPAIIFHLHDTLGMSVDAINKLLTKESGLLGLTEVTSDCRYVEDNYATKEDAKRAMDVYCHRLAKYIGAYTALMDGRLDAVVFTGGIGENAAMVRELSLGKLGVLGFEVDHERNLAARFGKSGFINKEGTRPAVVIPTNEELVIAQDASRLTA.

Residue Asn10 participates in Mg(2+) binding. An ATP-binding site is contributed by Lys17. A substrate-binding site is contributed by Arg91. The active-site Proton donor/acceptor is the Asp150. ATP-binding positions include 210 to 214, 285 to 287, and 333 to 337; these read HLGNG, DCR, and GIGEN. Glu387 provides a ligand contact to Mg(2+).

Belongs to the acetokinase family. In terms of assembly, homodimer. Requires Mg(2+) as cofactor. The cofactor is Mn(2+).

Its subcellular location is the cytoplasm. It carries out the reaction acetate + ATP = acetyl phosphate + ADP. It functions in the pathway metabolic intermediate biosynthesis; acetyl-CoA biosynthesis; acetyl-CoA from acetate: step 1/2. Functionally, catalyzes the formation of acetyl phosphate from acetate and ATP. Can also catalyze the reverse reaction. The polypeptide is Acetate kinase (Escherichia coli O157:H7).